The following is a 1257-amino-acid chain: Probable aldehyde oxidase gad-3 (1257 aa).

A 2Fe-2S ferredoxin-type domain is found at 4–91 (TGIFFNVNGK…KTFVITVEGV (88 aa)). Cysteine 43, cysteine 48, cysteine 51, and cysteine 73 together coordinate [2Fe-2S] cluster. The region spanning 229–459 (LKGDRIELLL…TSLEVHIDAL (231 aa)) is the FAD-binding PCMH-type domain. Residue glutamate 1208 is the Proton acceptor of the active site.

The protein belongs to the xanthine dehydrogenase family. [2Fe-2S] cluster is required as a cofactor. FAD serves as cofactor. The cofactor is Mo-molybdopterin.

It catalyses the reaction an aldehyde + O2 + H2O = a carboxylate + H2O2 + H(+). Its function is as follows. May be involved in the metabolism of 1-methylnicotinamide (MNA). Linked to regulation of longevity through generation of reactive oxygen species, where it probably functions in a pathway downstream of the sirtuin sir-2.1 and the nicotinamide N-methyltransferase anmt-1. The chain is Probable aldehyde oxidase gad-3 from Caenorhabditis elegans.